A 179-amino-acid chain; its full sequence is NADH-quinone oxidoreductase subunit B (179 aa).

[4Fe-4S] cluster-binding residues include C35, C36, C100, and C129.

It belongs to the complex I 20 kDa subunit family. NDH-1 is composed of 14 different subunits. Subunits NuoB, C, D, E, F, and G constitute the peripheral sector of the complex. [4Fe-4S] cluster serves as cofactor.

It localises to the cell inner membrane. It catalyses the reaction a quinone + NADH + 5 H(+)(in) = a quinol + NAD(+) + 4 H(+)(out). Functionally, NDH-1 shuttles electrons from NADH, via FMN and iron-sulfur (Fe-S) centers, to quinones in the respiratory chain. Couples the redox reaction to proton translocation (for every two electrons transferred, four hydrogen ions are translocated across the cytoplasmic membrane), and thus conserves the redox energy in a proton gradient. This Aquifex aeolicus (strain VF5) protein is NADH-quinone oxidoreductase subunit B.